The following is a 348-amino-acid chain: Uroporphyrinogen decarboxylase (348 aa).

Substrate contacts are provided by residues 27 to 31 (RQAGR), Phe-46, Asp-76, Tyr-152, Ser-207, and His-320.

It belongs to the uroporphyrinogen decarboxylase family. Homodimer.

Its subcellular location is the cytoplasm. It catalyses the reaction uroporphyrinogen III + 4 H(+) = coproporphyrinogen III + 4 CO2. The protein operates within porphyrin-containing compound metabolism; protoporphyrin-IX biosynthesis; coproporphyrinogen-III from 5-aminolevulinate: step 4/4. In terms of biological role, catalyzes the decarboxylation of four acetate groups of uroporphyrinogen-III to yield coproporphyrinogen-III. The chain is Uroporphyrinogen decarboxylase from Bacillus anthracis.